The primary structure comprises 712 residues: Potassium transporter 1 (712 aa).

The Cytoplasmic segment spans residues 1–19 (MNQSPSLIEQGISQQHLKT). A helical transmembrane segment spans residues 20 to 40 (LSCANVLTLAYQSLGVIYGDL). The Extracellular portion of the chain corresponds to 41 to 67 (STSPLYVYKTTFSGKLSLHEDDEEIFG). A helical transmembrane segment spans residues 68 to 88 (VFSFIFWTFTLIALFKYVFIV). At 89 to 154 (LSADDNGEGG…FFEKHPKSQK (66 aa)) the chain is on the cytoplasmic side. Residues 155–175 (CLLLFVLLGTCMAIGDSVLTP) form a helical membrane-spanning segment. Topologically, residues 176-189 (TISVLSAVSGVKLK) are extracellular. The chain crosses the membrane as a helical span at residues 190–210 (IPNLHENYVVIIACIILVAIF). Over 211–219 (SVQRYGTHR) the chain is Cytoplasmic. Residues 220–240 (VAFIFAPISTAWLLSISSIGV) form a helical membrane-spanning segment. Topologically, residues 241–267 (YNTIKWNPRIVSALSPVYMYKFLRSTG) are extracellular. The chain crosses the membrane as a helical span at residues 268–288 (VEGWVSLGGVVLSITGVETMF). Residues 289–300 (ADLGHFSSLSIK) are Cytoplasmic-facing. A helical membrane pass occupies residues 301–321 (VAFSFFVYPCLILAYMGEAAF). Residues 322 to 340 (LSKHHEDIQQSFYKAIPEP) lie on the Extracellular side of the membrane. The helical transmembrane segment at 341-361 (VFWPVFIVATFAAVVGSQAVI) threads the bilayer. The Cytoplasmic portion of the chain corresponds to 362 to 392 (SATFSIISQCCALDCFPRVKIIHTSSKIHGQ). Residues 393–413 (IYIPEVNWMLMCLCLAVTIGL) traverse the membrane as a helical segment. Topologically, residues 414–424 (RDTNMMGHAYG) are extracellular. A helical membrane pass occupies residues 425–445 (LAVTSVMLVTTCLMTLVMTIV). Residues 446–449 (WKQR) lie on the Cytoplasmic side of the membrane. A helical membrane pass occupies residues 450–470 (IITVLAFVVFFGSIELLYFSS). The Extracellular portion of the chain corresponds to 471-474 (CVYK). Residues 475–495 (VPEGGWIPILLSLTFMAVMYI) form a helical membrane-spanning segment. Over 496–712 (WNYGTTKKHE…LLEVGMVYYV (217 aa)) the chain is Cytoplasmic.

The protein belongs to the HAK/KUP transporter (TC 2.A.72.3) family. In terms of tissue distribution, detected in the whole mature plant but preferentially expressed in roots and stems, and in potassium-starved plants.

It is found in the cell membrane. Its function is as follows. High-affinity potassium transporter that could play a major role in the uptake of potassium from the rhizosphere. May act as a low-affinity potassium transporter under high potassium concentrations. Could also transport rubidium. The polypeptide is Potassium transporter 1 (POT1) (Arabidopsis thaliana (Mouse-ear cress)).